A 235-amino-acid polypeptide reads, in one-letter code: Orotidine 5'-phosphate decarboxylase (235 aa).

Substrate is bound by residues aspartate 17, lysine 39, 66 to 75 (DLKLHDIGNT), threonine 121, arginine 182, glutamine 191, glycine 211, and arginine 212. The active-site Proton donor is the lysine 68.

This sequence belongs to the OMP decarboxylase family. Type 1 subfamily. In terms of assembly, homodimer.

It catalyses the reaction orotidine 5'-phosphate + H(+) = UMP + CO2. Its pathway is pyrimidine metabolism; UMP biosynthesis via de novo pathway; UMP from orotate: step 2/2. In terms of biological role, catalyzes the decarboxylation of orotidine 5'-monophosphate (OMP) to uridine 5'-monophosphate (UMP). The polypeptide is Orotidine 5'-phosphate decarboxylase (Afipia carboxidovorans (strain ATCC 49405 / DSM 1227 / KCTC 32145 / OM5) (Oligotropha carboxidovorans)).